We begin with the raw amino-acid sequence, 239 residues long: Orotidine 5'-phosphate decarboxylase (239 aa).

Substrate is bound by residues D15, K36, 63–72 (DLKFHDIPNT), T127, R189, Q198, G218, and R219. K65 functions as the Proton donor in the catalytic mechanism.

This sequence belongs to the OMP decarboxylase family. Type 1 subfamily. Homodimer.

It carries out the reaction orotidine 5'-phosphate + H(+) = UMP + CO2. It participates in pyrimidine metabolism; UMP biosynthesis via de novo pathway; UMP from orotate: step 2/2. Catalyzes the decarboxylation of orotidine 5'-monophosphate (OMP) to uridine 5'-monophosphate (UMP). The chain is Orotidine 5'-phosphate decarboxylase from Prochlorococcus marinus subsp. pastoris (strain CCMP1986 / NIES-2087 / MED4).